We begin with the raw amino-acid sequence, 289 residues long: Bis(5'-nucleosyl)-tetraphosphatase, symmetrical (289 aa).

This sequence belongs to the Ap4A hydrolase family.

It carries out the reaction P(1),P(4)-bis(5'-adenosyl) tetraphosphate + H2O = 2 ADP + 2 H(+). Functionally, hydrolyzes diadenosine 5',5'''-P1,P4-tetraphosphate to yield ADP. In Yersinia pseudotuberculosis serotype IB (strain PB1/+), this protein is Bis(5'-nucleosyl)-tetraphosphatase, symmetrical.